Here is a 92-residue protein sequence, read N- to C-terminus: Small ribosomal subunit protein bS20 (92 aa).

The span at 1–21 shows a compositional bias: basic and acidic residues; the sequence is MPLHKSAEKRLRQAARRNERN. Disordered regions lie at residues 1–26 and 73–92; these read MPLH…ARKK and ASRK…PTAS. The segment covering 82-92 has biased composition (polar residues); the sequence is KALNNYTPTAS.

Belongs to the bacterial ribosomal protein bS20 family.

Its function is as follows. Binds directly to 16S ribosomal RNA. The protein is Small ribosomal subunit protein bS20 of Chlorobaculum tepidum (strain ATCC 49652 / DSM 12025 / NBRC 103806 / TLS) (Chlorobium tepidum).